Consider the following 898-residue polypeptide: Serine/threonine-protein kinase PKH3 (898 aa).

Residues 11-293 (FIFKEELGHG…LEQIKRHPYF (283 aa)) enclose the Protein kinase domain. ATP contacts are provided by residues 17–25 (LGHGSYSTV) and Lys-41. The Proton acceptor role is filled by Asp-138. Disordered regions lie at residues 435–484 (PPKV…PSTE) and 675–850 (DSKA…EKYS). The span at 459–468 (PLQTSSIPQK) shows a compositional bias: polar residues. Low complexity predominate over residues 469 to 483 (LSTSSASSALSAPST). At Ser-696 the chain carries Phosphoserine. Over residues 697-721 (IGNNVTTLSYTAKNGSQNNAPQNDN) the composition is skewed to polar residues. Positions 723–738 (GEEKPFRIPSSTKDRP) are enriched in basic and acidic residues. Polar residues-rich tracts occupy residues 740-758 (ANST…NNAG), 771-782 (SAPSTNTYTNGS), and 789-803 (RPST…NILT). Phosphoserine is present on Ser-753. A compositionally biased stretch (low complexity) spans 804–817 (SKKQGSSVFSPSSS). Residues 818-831 (TTKPQIKTTGYRQP) show a composition bias toward polar residues. Ser-871 is modified (phosphoserine).

This sequence belongs to the protein kinase superfamily. Ser/Thr protein kinase family.

It carries out the reaction L-seryl-[protein] + ATP = O-phospho-L-seryl-[protein] + ADP + H(+). The enzyme catalyses L-threonyl-[protein] + ATP = O-phospho-L-threonyl-[protein] + ADP + H(+). Serine/threonine-protein kinase which may phosphorylate the same targets substrates as PKH1 and PKH2, 2 upstream activators of PKC1. The protein is Serine/threonine-protein kinase PKH3 (PKH3) of Saccharomyces cerevisiae (strain ATCC 204508 / S288c) (Baker's yeast).